The following is a 513-amino-acid chain: Putative ADP-ribosyl glycohydrolase L444 (513 aa).

The span at 1–23 (MSDKIQSRESKTTKPTKTEKISD) shows a compositional bias: basic and acidic residues. Positions 1–33 (MSDKIQSRESKTTKPTKTEKISDKSGNLSQVKS) are disordered. Residues 24-33 (KSGNLSQVKS) show a composition bias toward polar residues.

This sequence belongs to the ADP-ribosylglycohydrolase family.

This chain is Putative ADP-ribosyl glycohydrolase L444, found in Acanthamoeba polyphaga mimivirus (APMV).